Here is a 277-residue protein sequence, read N- to C-terminus: Undecaprenyl-diphosphatase (277 aa).

The next 8 membrane-spanning stretches (helical) occupy residues 19-39 (FLPVSSTGHLFLFSSFFPFYG), 44-64 (FDDLFDIFIQSGAILSVLFLY), 89-109 (FHFLIQICIGAFPILIAGFIA), 122-142 (LLEILSGAWIFGGVLILVAEW), 154-174 (IGFKDSILIGIFQCMALIPGM), 195-215 (AEFSFFLAVPVLLAAGIYKLI), 224-244 (NTIPVLMFGFLVSFLLCTLVI), and 257-277 (SVFGVYRILLGVGVLVLTKLI).

This sequence belongs to the UppP family.

The protein localises to the cell inner membrane. It carries out the reaction di-trans,octa-cis-undecaprenyl diphosphate + H2O = di-trans,octa-cis-undecaprenyl phosphate + phosphate + H(+). In terms of biological role, catalyzes the dephosphorylation of undecaprenyl diphosphate (UPP). Confers resistance to bacitracin. The protein is Undecaprenyl-diphosphatase of Leptospira interrogans serogroup Icterohaemorrhagiae serovar copenhageni (strain Fiocruz L1-130).